Consider the following 186-residue polypeptide: Large ribosomal subunit protein eL18B (186 aa).

Lysine 50 is modified (N6,N6,N6-trimethyllysine). A Glycyl lysine isopeptide (Lys-Gly) (interchain with G-Cter in ubiquitin) cross-link involves residue lysine 116.

It belongs to the eukaryotic ribosomal protein eL18 family. In terms of assembly, component of the large ribosomal subunit (LSU). Mature yeast ribosomes consist of a small (40S) and a large (60S) subunit. The 40S small subunit contains 1 molecule of ribosomal RNA (18S rRNA) and 33 different proteins (encoded by 57 genes). The large 60S subunit contains 3 rRNA molecules (25S, 5.8S and 5S rRNA) and 46 different proteins (encoded by 81 genes). eL18 interacts with NAP1.

The protein resides in the cytoplasm. Functionally, component of the ribosome, a large ribonucleoprotein complex responsible for the synthesis of proteins in the cell. The small ribosomal subunit (SSU) binds messenger RNAs (mRNAs) and translates the encoded message by selecting cognate aminoacyl-transfer RNA (tRNA) molecules. The large subunit (LSU) contains the ribosomal catalytic site termed the peptidyl transferase center (PTC), which catalyzes the formation of peptide bonds, thereby polymerizing the amino acids delivered by tRNAs into a polypeptide chain. The nascent polypeptides leave the ribosome through a tunnel in the LSU and interact with protein factors that function in enzymatic processing, targeting, and the membrane insertion of nascent chains at the exit of the ribosomal tunnel. The sequence is that of Large ribosomal subunit protein eL18B from Saccharomyces cerevisiae (strain ATCC 204508 / S288c) (Baker's yeast).